Consider the following 151-residue polypeptide: MAKRVQVALTESIASLGKEGDLVEVAPGYARNFLLPYGKAMNVTPAVLKQIERKKEKEKIAADKLKQEALDFQTALSTIGRFTIKKQVGEDGVLFGTVTNGDVAEAIEAATKKEIDRRNITVPDIHNLGSFTAKIKLHPEVNAEVNIEVTS.

This sequence belongs to the bacterial ribosomal protein bL9 family.

In terms of biological role, binds to the 23S rRNA. The polypeptide is Large ribosomal subunit protein bL9 (Prochlorococcus marinus (strain MIT 9301)).